Reading from the N-terminus, the 249-residue chain is Proteasome activator complex subunit 1 (249 aa).

The tract at residues 59-102 (APLDIPVPDPVKEKEKEERKKQQEKEEKEEKKKGDEDDKGPPCG) is disordered. Residues 68–98 (PVKEKEKEERKKQQEKEEKEEKKKGDEDDKG) show a composition bias toward basic and acidic residues.

Belongs to the PA28 family. In terms of assembly, heterodimer of PSME1 and PSME2, which forms a hexameric ring. PSME1 can form homoheptamers.

Implicated in immunoproteasome assembly and required for efficient antigen processing. The PA28 activator complex enhances the generation of class I binding peptides by altering the cleavage pattern of the proteasome. The chain is Proteasome activator complex subunit 1 (Psme1) from Mus musculus (Mouse).